We begin with the raw amino-acid sequence, 331 residues long: 4-hydroxythreonine-4-phosphate dehydrogenase (331 aa).

Residues histidine 136 and threonine 137 each contribute to the substrate site. Histidine 166, histidine 211, and histidine 266 together coordinate a divalent metal cation. Positions 274, 283, and 292 each coordinate substrate.

This sequence belongs to the PdxA family. Homodimer. Requires Zn(2+) as cofactor. It depends on Mg(2+) as a cofactor. The cofactor is Co(2+).

It localises to the cytoplasm. It catalyses the reaction 4-(phosphooxy)-L-threonine + NAD(+) = 3-amino-2-oxopropyl phosphate + CO2 + NADH. It functions in the pathway cofactor biosynthesis; pyridoxine 5'-phosphate biosynthesis; pyridoxine 5'-phosphate from D-erythrose 4-phosphate: step 4/5. Catalyzes the NAD(P)-dependent oxidation of 4-(phosphooxy)-L-threonine (HTP) into 2-amino-3-oxo-4-(phosphooxy)butyric acid which spontaneously decarboxylates to form 3-amino-2-oxopropyl phosphate (AHAP). The sequence is that of 4-hydroxythreonine-4-phosphate dehydrogenase from Thioalkalivibrio sulfidiphilus (strain HL-EbGR7).